Reading from the N-terminus, the 37-residue chain is Large ribosomal subunit protein bL36 (37 aa).

The protein belongs to the bacterial ribosomal protein bL36 family.

In Histophilus somni (strain 129Pt) (Haemophilus somnus), this protein is Large ribosomal subunit protein bL36.